The chain runs to 60 residues: Large ribosomal subunit protein uL30 (60 aa).

This sequence belongs to the universal ribosomal protein uL30 family. In terms of assembly, part of the 50S ribosomal subunit.

The sequence is that of Large ribosomal subunit protein uL30 from Moorella thermoacetica (strain ATCC 39073 / JCM 9320).